A 1070-amino-acid chain; its full sequence is DNA-directed RNA polymerase subunit beta (1070 aa).

It belongs to the RNA polymerase beta chain family. As to quaternary structure, in plastids the minimal PEP RNA polymerase catalytic core is composed of four subunits: alpha, beta, beta', and beta''. When a (nuclear-encoded) sigma factor is associated with the core the holoenzyme is formed, which can initiate transcription.

It localises to the plastid. The enzyme catalyses RNA(n) + a ribonucleoside 5'-triphosphate = RNA(n+1) + diphosphate. DNA-dependent RNA polymerase catalyzes the transcription of DNA into RNA using the four ribonucleoside triphosphates as substrates. The chain is DNA-directed RNA polymerase subunit beta from Cuscuta exaltata (Tall dodder).